A 152-amino-acid polypeptide reads, in one-letter code: MNSDEYIFNIKDILNILPHRYPFLLIDRILDFKAFQYLKALKNCTVNEPFFQGHFIKEPVFPGVLMIEAMSQAAAVLIFKSIGKLNINQLYYFVGIENTRFKKIVVPGDQIFIEVIYLKSKKNFIKFKIFAIVNKKNVCKSTIIFYKKNIFN.

The active site involves histidine 54.

Belongs to the thioester dehydratase family. FabZ subfamily.

It is found in the cytoplasm. It catalyses the reaction a (3R)-hydroxyacyl-[ACP] = a (2E)-enoyl-[ACP] + H2O. In terms of biological role, involved in unsaturated fatty acids biosynthesis. Catalyzes the dehydration of short chain beta-hydroxyacyl-ACPs and long chain saturated and unsaturated beta-hydroxyacyl-ACPs. In Buchnera aphidicola subsp. Schizaphis graminum (strain Sg), this protein is 3-hydroxyacyl-[acyl-carrier-protein] dehydratase FabZ.